A 367-amino-acid chain; its full sequence is MTGKKLKEGFTTGACSAAAAKAATRLLLKGKPILEIETTLPNKRQVLFTVKRCQLEGEVATCSVVKDAGDDPDCTHGAELTARVRLTKENEIKLKGGDGVAVVTKAGLGLEIGQSAINPIPRKNIKEMILEELQGSSFNGAEVEISVPGGQEMAKKTMNERLGLIGGISILGTTGIVKPYSTAAFKASVIQAIQMAKEYGIDTIVLTTGGKSEKFAMDLLPNLNELSFIQVGDFIGTGIKTSVKESIRHTIIVGMIGKLSKMADGVMMTHRGGSSVNTTMLSTIARSIGVPEEIAIEIQNANTARHVLEICKVSGYKIITTKICEIVAEKCSKHAGTNIMISCYMVDFDGKLLGKCENFSPNVGLNL.

This sequence belongs to the CbiD family.

The catalysed reaction is Co-precorrin-5B + S-adenosyl-L-methionine = Co-precorrin-6A + S-adenosyl-L-homocysteine. Its pathway is cofactor biosynthesis; adenosylcobalamin biosynthesis; cob(II)yrinate a,c-diamide from sirohydrochlorin (anaerobic route): step 6/10. Functionally, catalyzes the methylation of C-1 in cobalt-precorrin-5B to form cobalt-precorrin-6A. The protein is Cobalt-precorrin-5B C(1)-methyltransferase of Leptospira interrogans serogroup Icterohaemorrhagiae serovar copenhageni (strain Fiocruz L1-130).